The following is a 465-amino-acid chain: Siroheme synthase (465 aa).

The precorrin-2 dehydrogenase /sirohydrochlorin ferrochelatase stretch occupies residues 1-203 (MDFLPLFHSL…GRPAEAERLL (203 aa)). NAD(+)-binding positions include 22 to 23 (EV) and 43 to 44 (PQ). Residue Ser-128 is modified to Phosphoserine. The interval 217 to 465 (GEVYLVGAGP…AWFEGAREDA (249 aa)) is uroporphyrinogen-III C-methyltransferase. An S-adenosyl-L-methionine-binding site is contributed by Pro-226. Asp-249 functions as the Proton acceptor in the catalytic mechanism. The Proton donor role is filled by Lys-271. S-adenosyl-L-methionine-binding positions include 302–304 (GGD), Ile-307, 332–333 (TA), Met-384, and Gly-413.

In the N-terminal section; belongs to the precorrin-2 dehydrogenase / sirohydrochlorin ferrochelatase family. This sequence in the C-terminal section; belongs to the precorrin methyltransferase family.

The catalysed reaction is uroporphyrinogen III + 2 S-adenosyl-L-methionine = precorrin-2 + 2 S-adenosyl-L-homocysteine + H(+). The enzyme catalyses precorrin-2 + NAD(+) = sirohydrochlorin + NADH + 2 H(+). It carries out the reaction siroheme + 2 H(+) = sirohydrochlorin + Fe(2+). It functions in the pathway cofactor biosynthesis; adenosylcobalamin biosynthesis; precorrin-2 from uroporphyrinogen III: step 1/1. It participates in cofactor biosynthesis; adenosylcobalamin biosynthesis; sirohydrochlorin from precorrin-2: step 1/1. The protein operates within porphyrin-containing compound metabolism; siroheme biosynthesis; precorrin-2 from uroporphyrinogen III: step 1/1. Its pathway is porphyrin-containing compound metabolism; siroheme biosynthesis; siroheme from sirohydrochlorin: step 1/1. It functions in the pathway porphyrin-containing compound metabolism; siroheme biosynthesis; sirohydrochlorin from precorrin-2: step 1/1. Functionally, multifunctional enzyme that catalyzes the SAM-dependent methylations of uroporphyrinogen III at position C-2 and C-7 to form precorrin-2 via precorrin-1. Then it catalyzes the NAD-dependent ring dehydrogenation of precorrin-2 to yield sirohydrochlorin. Finally, it catalyzes the ferrochelation of sirohydrochlorin to yield siroheme. In Pseudomonas aeruginosa (strain ATCC 15692 / DSM 22644 / CIP 104116 / JCM 14847 / LMG 12228 / 1C / PRS 101 / PAO1), this protein is Siroheme synthase.